Consider the following 398-residue polypeptide: Trans-2-enoyl-CoA reductase [NADH] (398 aa).

NAD(+) is bound by residues 47–52, 74–75, 111–112, and 139–140; these read GASSGF, FE, DA, and LA. Tyr-225 lines the substrate pocket. Tyr-235 functions as the Proton donor in the catalytic mechanism. NAD(+) contacts are provided by residues Lys-244 and 274-276; that span reads IVT.

The protein belongs to the TER reductase family. As to quaternary structure, monomer.

It carries out the reaction a 2,3-saturated acyl-CoA + NAD(+) = a (2E)-enoyl-CoA + NADH + H(+). Its pathway is lipid metabolism; fatty acid biosynthesis. In terms of biological role, involved in the fatty acid synthesis (FAS II). Catalyzes the reduction of a carbon-carbon double bond in an enoyl moiety that is covalently linked to a coenzyme A (CoA). The polypeptide is Trans-2-enoyl-CoA reductase [NADH] (Clostridium beijerinckii (strain ATCC 51743 / NCIMB 8052) (Clostridium acetobutylicum)).